A 67-amino-acid chain; its full sequence is Beta-defensin 123 (67 aa).

The signal sequence occupies residues Met1–Gly20. 3 cysteine pairs are disulfide-bonded: Cys25–Cys52, Cys32–Cys46, and Cys36–Cys53.

The protein belongs to the beta-defensin family.

It localises to the secreted. Functionally, has antibacterial activity. The sequence is that of Beta-defensin 123 (DEFB123) from Pongo pygmaeus (Bornean orangutan).